A 576-amino-acid polypeptide reads, in one-letter code: Formate--tetrahydrofolate ligase (576 aa).

Threonine 64 to threonine 71 lines the ATP pocket.

The protein belongs to the formate--tetrahydrofolate ligase family.

The catalysed reaction is (6S)-5,6,7,8-tetrahydrofolate + formate + ATP = (6R)-10-formyltetrahydrofolate + ADP + phosphate. It functions in the pathway one-carbon metabolism; tetrahydrofolate interconversion. This is Formate--tetrahydrofolate ligase from Aeromonas hydrophila subsp. hydrophila (strain ATCC 7966 / DSM 30187 / BCRC 13018 / CCUG 14551 / JCM 1027 / KCTC 2358 / NCIMB 9240 / NCTC 8049).